The primary structure comprises 261 residues: Thioesterase frbD (261 aa).

Belongs to the AMT4 thioesterase family.

It functions in the pathway antifungal biosynthesis. Thioesterase; part of the gene cluster that mediates the biosynthesis of the antifungal antibiotic FR901469, an inhibitor of beta-1,3-glucansynthase, exerting antifungal activity against the pathogenes Candida albicans and Aspergillus fumigatus. FR901469 is a cyclic depsipeptide containing 12 amino acid residues and a fatty acid chain. The NRPS frbI contains 12 modules responsible for the formation of the depsipeptide backbone which is denoted as Acyl-Thr-Ala-Tyr-Val-4OHPro-Thr-Thr-3OHPro-threo3OHGln-Gly-Thr-Orn-OH (C71H116N14O23). The PKS frbB is probably involved in the production of the hydrocarbon chain, and the acyl-CoA ligase frbC might be involved in the transport of the chain to the peptide ptoduct of frbI. Because FR901469 contains 3 hydroxylated amino acid residues, the 3 oxygenases frbA, frbH, and frbJ might be participating in amino acid hydroxylation. As no thioesterase domains were detected in frbI or frbB, the thioesterases frbD and frbE may instead release and cyclize the products of the NRPS and PKS, respectively. The sequence is that of Thioesterase frbD from Dothideomycetidae sp. (strain 11243) (Fungal sp. (strain No.11243)).